The primary structure comprises 570 residues: Sulfite reductase [NADPH] hemoprotein beta-component (570 aa).

Residues Cys434, Cys440, Cys479, and Cys483 each coordinate [4Fe-4S] cluster. Siroheme is bound at residue Cys483.

It belongs to the nitrite and sulfite reductase 4Fe-4S domain family. Alpha(8)-beta(8). The alpha component is a flavoprotein, the beta component is a hemoprotein. Requires siroheme as cofactor. It depends on [4Fe-4S] cluster as a cofactor.

The enzyme catalyses hydrogen sulfide + 3 NADP(+) + 3 H2O = sulfite + 3 NADPH + 4 H(+). It participates in sulfur metabolism; hydrogen sulfide biosynthesis; hydrogen sulfide from sulfite (NADPH route): step 1/1. Component of the sulfite reductase complex that catalyzes the 6-electron reduction of sulfite to sulfide. This is one of several activities required for the biosynthesis of L-cysteine from sulfate. This chain is Sulfite reductase [NADPH] hemoprotein beta-component, found in Shigella flexneri.